The chain runs to 594 residues: UvrABC system protein C (594 aa).

Positions 13-99 (HSSGVYQYFD…IKQLKPKYNI (87 aa)) constitute a GIY-YIG domain. The region spanning 205-240 (DKLIKELELKMERLSNNLRFEEALIYRDRIAKIQKI) is the UVR domain.

It belongs to the UvrC family. As to quaternary structure, interacts with UvrB in an incision complex.

The protein resides in the cytoplasm. In terms of biological role, the UvrABC repair system catalyzes the recognition and processing of DNA lesions. UvrC both incises the 5' and 3' sides of the lesion. The N-terminal half is responsible for the 3' incision and the C-terminal half is responsible for the 5' incision. The protein is UvrABC system protein C of Helicobacter pylori (strain Shi470).